Reading from the N-terminus, the 140-residue chain is Nucleoside diphosphate kinase (140 aa).

Residues Lys11, Phe59, Arg87, Thr93, Arg104, and Asn114 each coordinate ATP. The Pros-phosphohistidine intermediate role is filled by His117.

Belongs to the NDK family. Homotetramer. Requires Mg(2+) as cofactor.

Its subcellular location is the cytoplasm. It carries out the reaction a 2'-deoxyribonucleoside 5'-diphosphate + ATP = a 2'-deoxyribonucleoside 5'-triphosphate + ADP. It catalyses the reaction a ribonucleoside 5'-diphosphate + ATP = a ribonucleoside 5'-triphosphate + ADP. Major role in the synthesis of nucleoside triphosphates other than ATP. The ATP gamma phosphate is transferred to the NDP beta phosphate via a ping-pong mechanism, using a phosphorylated active-site intermediate. The sequence is that of Nucleoside diphosphate kinase from Ruegeria pomeroyi (strain ATCC 700808 / DSM 15171 / DSS-3) (Silicibacter pomeroyi).